A 240-amino-acid chain; its full sequence is NADPH-flavin oxidoreductase (240 aa).

FMN is bound by residues 11–15 (HRSIR), serine 39, 67–69 (QAY), 128–131 (YIGG), and 167–169 (KPR).

It belongs to the flavin oxidoreductase frp family. Homodimer.

The enzyme catalyses FMNH2 + NADP(+) = FMN + NADPH + 2 H(+). In terms of biological role, catalyzes the NADPH-dependent reduction of FMN to FMNH(2). Involved in bioluminescence by providing FMNH(2) to luciferase. In Vibrio harveyi (Beneckea harveyi), this protein is NADPH-flavin oxidoreductase.